A 251-amino-acid chain; its full sequence is Appressoria-specific virulence factor GAS1 (251 aa).

The N-terminal stretch at 1–21 (MSLKSLIAATILAAPLVAGHG) is a signal peptide. The tract at residues 40–76 (VTSTPRDGTRRDPFQQDSTRFKGQQADTFGETVGGGQ) is disordered. Positions 54 to 66 (QQDSTRFKGQQAD) are enriched in polar residues.

It localises to the cytoplasm. Functionally, appressoria-specific virulence factor required for appressorial penetration in host and lesion development. In Pyricularia oryzae (strain 70-15 / ATCC MYA-4617 / FGSC 8958) (Rice blast fungus), this protein is Appressoria-specific virulence factor GAS1.